The sequence spans 368 residues: 2-aminoethylphosphonate--pyruvate transaminase (368 aa).

The residue at position 192 (Lys-192) is an N6-(pyridoxal phosphate)lysine.

This sequence belongs to the class-V pyridoxal-phosphate-dependent aminotransferase family. PhnW subfamily. Homodimer. Requires pyridoxal 5'-phosphate as cofactor.

It catalyses the reaction (2-aminoethyl)phosphonate + pyruvate = phosphonoacetaldehyde + L-alanine. Its function is as follows. Involved in phosphonate degradation. The chain is 2-aminoethylphosphonate--pyruvate transaminase from Pseudomonas putida (strain W619).